The following is a 409-amino-acid chain: Diels-Alderase ucsH (409 aa).

The helical transmembrane segment at 386-406 (IYFFICMLLAVVTFGYINILE) threads the bilayer.

It belongs to the Diels-Alderase family.

The protein localises to the membrane. The protein operates within mycotoxin biosynthesis. Functionally, diels-Alderase; part of the gene cluster that mediates the biosynthesis of UCS1025A, a member of the pyrrolizidinone family that acts as a strong telomerase inhibitor and displays potent antibacterial and antitumor properties. These compounds share a hemiaminal-containing pyrrolizidinone core fused with a gamma-lactone, giving a furopyrrolizidine that is connected to a decalin fragment. The polyketide synthase module (PKS) of the PKS-NRPS ucsA is responsible for the synthesis of the polyketide backbone via the condensation of an acetyl-CoA starter unit with 6 malonyl-CoA units. The downstream nonribosomal peptide synthetase (NRPS) module then amidates the carboxyl end of the polyketide with a 2S,3S-methylproline derived from L-isoleucine by the 2-oxoglutarate-dependent dioxygenase ucsF which converts L-isoleucine to (4S,5S)-4-methylpyrroline-5-carboxylate that is further converted to 2S,3S-methylproline by the pyrroline-5-carboxylate reductase ucsG. Reductive release of the completed aminoacyl polyketide from the assembly line can form the 3-pyrrolin-2-one structure via an intramolecular Knoevenagel reaction. Because ucsA lacks a designated enoylreductase (ER) domain, the required activity is provided the enoyl reductase ucsL. This keto acyclic precursor is the substrate of the Diels-Alderase ucsH, that catalyzes the Diels-Alder cycloaddition. Oxidation of the 3S-methyl group to a carboxylate by the cytochrome P450 monooxygenase ucsK allows an oxa-Michael cyclization that might involve the reductase/dehydrogenase ucsI and which furnishes the furopyrrolizidine. The oxidase ucsJ likely plays a critical role in stereoselective reduction of the C5-C6 double bond to afford the required R-configured carboxylate group. Further enolization and oxidation at C5 by an unidentified enzyme affords the last intermediate that can undergo oxa-Michael cyclization to yield UCS1025A. The protein is Diels-Alderase ucsH of Acremonium sp.